Reading from the N-terminus, the 111-residue chain is Rubredoxin (111 aa).

Positions 11 to 62 (LDRFECRSCGYVYEPEKGDNKHDIAPETPFAELPINWRCPVCTAKKAAFTNI) constitute a Rubredoxin-like domain. Residues C16, C19, C49, and C52 each coordinate Fe cation.

This sequence belongs to the rubredoxin family. Fe(3+) is required as a cofactor.

Its function is as follows. Rubredoxin is a small nonheme, iron protein lacking acid-labile sulfide. Its single Fe, chelated to 4 Cys, functions as an electron acceptor and may also stabilize the conformation of the molecule. Could be involved in hydrogenase-linked redox processes. This Nostoc sp. (strain PCC 7120 / SAG 25.82 / UTEX 2576) protein is Rubredoxin (rub).